A 270-amino-acid polypeptide reads, in one-letter code: Phosphatidylglycerol--prolipoprotein diacylglyceryl transferase (270 aa).

The next 4 helical transmembrane spans lie at 19 to 39 (FPVY…LWLA), 56 to 76 (LVLI…VIFE), 92 to 112 (QGGL…ILFA), and 116 to 136 (GVSF…GQAI). A 1,2-diacyl-sn-glycero-3-phospho-(1'-sn-glycerol) is bound at residue R138. A run of 3 helical transmembrane segments spans residues 178 to 198 (HPTF…LLAL), 206 to 226 (GELF…VEGL), and 236 to 256 (LRIA…FIIV).

It belongs to the Lgt family.

It localises to the cell membrane. The catalysed reaction is L-cysteinyl-[prolipoprotein] + a 1,2-diacyl-sn-glycero-3-phospho-(1'-sn-glycerol) = an S-1,2-diacyl-sn-glyceryl-L-cysteinyl-[prolipoprotein] + sn-glycerol 1-phosphate + H(+). It functions in the pathway protein modification; lipoprotein biosynthesis (diacylglyceryl transfer). Functionally, catalyzes the transfer of the diacylglyceryl group from phosphatidylglycerol to the sulfhydryl group of the N-terminal cysteine of a prolipoprotein, the first step in the formation of mature lipoproteins. This Bacillus thuringiensis subsp. konkukian (strain 97-27) protein is Phosphatidylglycerol--prolipoprotein diacylglyceryl transferase.